A 476-amino-acid polypeptide reads, in one-letter code: Nyctalopin (476 aa).

An N-terminal signal peptide occupies residues 1-18; sequence MLVLLLHAVVLGLPSAWA. LRR repeat units follow at residues 60-84, 85-108, 110-133, 134-157, 159-181, 182-204, 205-228, 229-252, 254-276, 277-300, and 302-324; these read VSID…PSLR, RLSL…PRLA, LRLA…SRLR, RLDL…PALR, LAAF…NLTH, AHLE…RRLR, SLSL…GVLE, HLLL…RRLR, LNLG…AELE, LLYL…SGLL, and LHLN…FFLG. N-linked (GlcNAc...) asparagine glycosylation occurs at Asn92. Asn178 is a glycosylation site (N-linked (GlcNAc...) asparagine). N-linked (GlcNAc...) asparagine glycosylation occurs at Asn295. Residues 336–387 enclose the LRRCT domain; sequence DCRLEWLRDWMEGSGRVTDVPCASPGSVAGLDLSQVTFGRSSDGLCVDPEEL. N-linked (GlcNAc...) asparagine glycans are attached at residues Asn388, Asn427, and Asn434.

This sequence belongs to the small leucine-rich proteoglycan (SLRP) family. SLRP class IV subfamily. As to expression, expressed in kidney and retina. Also at low levels in brain, testis and muscle. Within the retina, expressed in the inner segment of photoreceptors, outer and inner nuclear layers and the ganglion cell layer.

It localises to the secreted. It is found in the extracellular space. The protein resides in the extracellular matrix. This is Nyctalopin (NYX) from Homo sapiens (Human).